We begin with the raw amino-acid sequence, 1273 residues long: DNA-directed RNA polymerase subunit beta (1273 aa).

A disordered region spans residues 1252-1273 (ADDQDLVVSSNDEEVSENDERS).

The protein belongs to the RNA polymerase beta chain family. As to quaternary structure, the RNAP catalytic core consists of 2 alpha, 1 beta, 1 beta' and 1 omega subunit. When a sigma factor is associated with the core the holoenzyme is formed, which can initiate transcription.

It catalyses the reaction RNA(n) + a ribonucleoside 5'-triphosphate = RNA(n+1) + diphosphate. Functionally, DNA-dependent RNA polymerase catalyzes the transcription of DNA into RNA using the four ribonucleoside triphosphates as substrates. This chain is DNA-directed RNA polymerase subunit beta, found in Dehalococcoides mccartyi (strain CBDB1).